The chain runs to 196 residues: Glycerol-3-phosphate acyltransferase (196 aa).

5 consecutive transmembrane segments (helical) span residues 1–21 (MIIF…SISG), 55–75 (IAIF…WLGT), 81–101 (PIYL…PIYF), 118–138 (AISI…VYLF), and 140–160 (YASL…WYIQ).

This sequence belongs to the PlsY family. Probably interacts with PlsX.

It is found in the cell inner membrane. It carries out the reaction an acyl phosphate + sn-glycerol 3-phosphate = a 1-acyl-sn-glycero-3-phosphate + phosphate. The protein operates within lipid metabolism; phospholipid metabolism. In terms of biological role, catalyzes the transfer of an acyl group from acyl-phosphate (acyl-PO(4)) to glycerol-3-phosphate (G3P) to form lysophosphatidic acid (LPA). This enzyme utilizes acyl-phosphate as fatty acyl donor, but not acyl-CoA or acyl-ACP. This chain is Glycerol-3-phosphate acyltransferase, found in Blochmanniella floridana.